The sequence spans 206 residues: FMN-dependent NADH:quinone oxidoreductase (206 aa).

Residues 15 to 17 (SVS), 94 to 97 (MYNF), and 138 to 141 (TRGG) each bind FMN.

It belongs to the azoreductase type 1 family. Homodimer. It depends on FMN as a cofactor.

It catalyses the reaction 2 a quinone + NADH + H(+) = 2 a 1,4-benzosemiquinone + NAD(+). The enzyme catalyses N,N-dimethyl-1,4-phenylenediamine + anthranilate + 2 NAD(+) = 2-(4-dimethylaminophenyl)diazenylbenzoate + 2 NADH + 2 H(+). Quinone reductase that provides resistance to thiol-specific stress caused by electrophilic quinones. In terms of biological role, also exhibits azoreductase activity. Catalyzes the reductive cleavage of the azo bond in aromatic azo compounds to the corresponding amines. The protein is FMN-dependent NADH:quinone oxidoreductase of Sinorhizobium medicae (strain WSM419) (Ensifer medicae).